Here is a 1178-residue protein sequence, read N- to C-terminus: Pyruvate carboxylase, mitochondrial (1178 aa).

The transit peptide at 1 to 20 (MLKFRTVHGGLRLLGIRRTS) directs the protein to the mitochondrion. N6-acetyllysine occurs at positions 35 and 39. The Biotin carboxylation domain maps to 36–486 (PIKKVMVANR…DTQFIDENPE (451 aa)). K79 bears the N6-acetyllysine; alternate mark. K79 carries the post-translational modification N6-succinyllysine; alternate. N6-acetyllysine occurs at positions 148 and 152. ATP-binding residues include K152 and E236. Residues 156–353 (RAIAIAAGVP…LVHAQIHVAE (198 aa)) form the ATP-grasp domain. An N6-acetyllysine modification is found at K241. H271 serves as a coordination point for ATP. Residues K297 and K319 each carry the N6-acetyllysine modification. The active site involves R328. Residue K434 is modified to N6-acetyllysine. N6-succinyllysine is present on K442. The Pyruvate carboxyltransferase domain occupies 563 to 832 (LLLMDTTFRD…DTEVPMERVF (270 aa)). A substrate-binding site is contributed by 571–575 (RDAHQ). Residue D572 participates in Mn(2+) binding. N6-acetyllysine is present on K589. Position 644 (R644) interacts with substrate. 2 positions are modified to N6-acetyllysine: K661 and K717. Mn(2+) is bound at residue K741. K741 is subject to N6-carboxylysine. K748 is modified (N6-acetyllysine). H771 and H773 together coordinate Mn(2+). K892 carries the post-translational modification N6-acetyllysine. Residue T908 coordinates substrate. K969 and K992 each carry N6-acetyllysine. Position 1003 is a phosphothreonine (T1003). Residues K1061, K1090, and K1124 each carry the N6-acetyllysine modification. Residues 1109–1178 (KGQIGAPMPG…EGDDLILEIE (70 aa)) enclose the Biotinyl-binding domain. The residue at position 1144 (K1144) is an N6-biotinyllysine.

As to quaternary structure, homotetramer. Interacts (via the biotin carboxylation domain) with SIRT4. It depends on biotin as a cofactor. Mn(2+) is required as a cofactor. Post-translationally, acetylation of Lys-748 might play a role in catalytic activity regulation.

Its subcellular location is the mitochondrion matrix. It carries out the reaction hydrogencarbonate + pyruvate + ATP = oxaloacetate + ADP + phosphate + H(+). The protein operates within carbohydrate biosynthesis; gluconeogenesis. Functionally, pyruvate carboxylase catalyzes a 2-step reaction, involving the ATP-dependent carboxylation of the covalently attached biotin in the first step and the transfer of the carboxyl group to pyruvate in the second. Catalyzes in a tissue specific manner, the initial reactions of glucose (liver, kidney) and lipid (adipose tissue, liver, brain) synthesis from pyruvate. This is Pyruvate carboxylase, mitochondrial from Homo sapiens (Human).